We begin with the raw amino-acid sequence, 453 residues long: uncharacterized protein (453 aa).

To B.subtilis YcdB.

This is an uncharacterized protein from Bacillus subtilis (strain 168).